A 90-amino-acid polypeptide reads, in one-letter code: Envelope protein US9 (90 aa).

Residues 1-67 (MTSRLSDPNS…RRRRTRCVGM (67 aa)) are Intravirion-facing. The Internalization motif signature appears at 21 to 24 (YPTA). The acidic stretch occupies residues 30–39 (EAYYSESEDE). Residues Ser-34 and Ser-36 each carry the phosphoserine; by host CK2 modification. Residues 68-88 (VIACLLVAVLSGGFGALLMWL) traverse the membrane as a helical; Signal-anchor for type II membrane protein segment. The Virion surface portion of the chain corresponds to 89-90 (LR).

This sequence belongs to the alphaherpesvirinae envelope protein US9 family. Phosphorylated on serines within the acidic cluster, possibly by host CK2. Phosphorylation determines whether endocytosed viral US9 traffics to the trans-Golgi network or recycles to the cell membrane.

It localises to the virion membrane. Its subcellular location is the host Golgi apparatus membrane. It is found in the host smooth endoplasmic reticulum membrane. The protein resides in the host cell membrane. Essential for the anterograde spread of the infection throughout the host nervous system. Together with the gE/gI heterodimer, US9 is involved in the sorting and transport of viral structural components toward axon tips. The polypeptide is Envelope protein US9 (Homo sapiens (Human)).